A 591-amino-acid polypeptide reads, in one-letter code: V-type ATP synthase alpha chain (591 aa).

233-240 lines the ATP pocket; it reads GPFGAGKT.

This sequence belongs to the ATPase alpha/beta chains family.

It carries out the reaction ATP + H2O + 4 H(+)(in) = ADP + phosphate + 5 H(+)(out). Produces ATP from ADP in the presence of a proton gradient across the membrane. The V-type alpha chain is a catalytic subunit. The protein is V-type ATP synthase alpha chain of Streptococcus pyogenes serotype M5 (strain Manfredo).